The primary structure comprises 877 residues: DNA polymerase I (877 aa).

The 94-residue stretch at 177 to 270 (TPAQFIDLKA…LEDLVYSGPD (94 aa)) folds into the 5'-3' exonuclease domain. One can recognise a 3'-5' exonuclease domain in the interval 302–465 (DFTIVDQISQ…TEPILLEKLS (164 aa)).

The protein belongs to the DNA polymerase type-A family. Single-chain monomer with multiple functions.

The enzyme catalyses DNA(n) + a 2'-deoxyribonucleoside 5'-triphosphate = DNA(n+1) + diphosphate. Its function is as follows. In addition to polymerase activity, this DNA polymerase exhibits 3'-5' and 5'-3' exonuclease activity. The chain is DNA polymerase I (polA) from Streptococcus pneumoniae (strain ATCC BAA-255 / R6).